A 508-amino-acid polypeptide reads, in one-letter code: Putative inorganic phosphate transporter 1-13 (508 aa).

Residues 1 to 22 (MAGNQQLRVLHALDIARTQLYH) are Cytoplasmic-facing. The chain crosses the membrane as a helical span at residues 23–43 (FIAIVIAGMGFFTDAYDLFSI). Residues 44–64 (SLVADLLGHVYYHGELPRNIH) lie on the Extracellular side of the membrane. Residues 65–85 (AAVTGIALCGTVPGQLVFGWL) form a helical membrane-spanning segment. The Cytoplasmic segment spans residues 86 to 93 (GDKMGRKR). Residues 94 to 114 (VYGITLLLMVVSSLASGLSFS) form a helical membrane-spanning segment. The Extracellular segment spans residues 115–117 (KHE). A helical membrane pass occupies residues 118–138 (GMNIIAVLCFFRFWLGVSIGG). Residues 139 to 159 (DYPLSATIMSEYANKRTRGAF) are Cytoplasmic-facing. A helical membrane pass occupies residues 160–180 (IAAVFAMQGFGNLAAGIIGMI). The Extracellular segment spans residues 181–192 (VSAAFKHSSASK). A helical membrane pass occupies residues 193–213 (IDYAWRIILMFGAIPAALTYH). Topologically, residues 214 to 277 (WRMKMPETAR…FEFLHRHGLH (64 aa)) are cytoplasmic. Residues 278–298 (LLGTTVCWFVLDVTFYSLNIF) form a helical membrane-spanning segment. Over 299 to 328 (MKNIFTEVGLLPRLDSEYHHTLQRMITMTA) the chain is Extracellular. A helical transmembrane segment spans residues 329–349 (VHTFISLCGALPGYFFTVAFV). The Cytoplasmic segment spans residues 350–354 (DRIGR). Residues 355 to 375 (VKIQLIGFTMMTVFMLCLAIP) traverse the membrane as a helical segment. Topologically, residues 376–389 (YDQWLRHKNKYGFA) are extracellular. A helical membrane pass occupies residues 390 to 410 (VMYGLTFFFANFGPNTTTFII). The Cytoplasmic segment spans residues 411–424 (PAEIFPARLRSTCH). A helical membrane pass occupies residues 425–445 (GISGAVGKIGAIVGVFGFLYT). Over 446–450 (EYHIR) the chain is Extracellular. The chain crosses the membrane as a helical span at residues 451-471 (IFLFVLIGCNLVGFIFTLLLP). Over 472–508 (ESKGKSLEDLTGEIEEFQEEDEGSEVALSRPIHTVPL) the chain is Cytoplasmic.

It belongs to the major facilitator superfamily. Phosphate:H(+) symporter (TC 2.A.1.9) family.

The protein localises to the membrane. Functionally, high-affinity transporter for external inorganic phosphate. In Oryza sativa subsp. japonica (Rice), this protein is Putative inorganic phosphate transporter 1-13 (PHT1-13).